The following is a 713-amino-acid chain: DNA polymerase eta (713 aa).

The 251-residue stretch at 9-259 folds into the UmuC domain; it reads VALVDMDCFF…MPIRKIRSLG (251 aa). 2 residues coordinate Mg(2+): Asp13 and Met14. Residues Asp13 and Met14 each coordinate Mn(2+). Position 61 (Arg61) interacts with a 2'-deoxyribonucleoside 5'-triphosphate. Mg(2+)-binding residues include Asp115 and Glu116. Positions 115 and 116 each coordinate Mn(2+). 2 disordered regions span residues 441–472 and 495–527; these read TSFLSSDPSSLPKVPVTSSEAKTQGSGPAVTA and EASLSSLTAPTQAPMSNSPSKPSLPFQTSQSTG. 2 stretches are compositionally biased toward polar residues: residues 456-466 and 497-527; these read VTSSEAKTQGS and SLSSLTAPTQAPMSNSPSKPSLPFQTSQSTG. The UBZ3-type zinc finger occupies 628–662; it reads AAEDQVPCEKCGSLVPVWDMPEHMDYHFALELQKS. 4 residues coordinate Zn(2+): Cys635, Cys638, His650, and His654. The tract at residues 677–705 is disordered; that stretch reads VSHQGKRNPKSPLACTNKRPRPEGMQTLE. Glycyl lysine isopeptide (Lys-Gly) (interchain with G-Cter in ubiquitin) cross-links involve residues Lys682, Lys686, and Lys694. The PIP-box motif lies at 701-708; the sequence is MQTLESFF. Lys709 is covalently cross-linked (Glycyl lysine isopeptide (Lys-Gly) (interchain with G-Cter in ubiquitin)).

It belongs to the DNA polymerase type-Y family. In terms of assembly, interacts with REV1. Interacts with monoubiquitinated PCNA, but not unmodified PCNA. Interacts with POLI; this interaction targets POLI to the replication machinery. Interacts with PALB2 and BRCA2; the interactions are direct and are required to sustain the recruitment of POLH at blocked replication forks and to stimulate POLH-dependent DNA synthesis on D loop substrates. Interacts (via C-terminus) with TRAIP. Interacts with ubiquitin. Interacts with POLDIP2. Requires Mg(2+) as cofactor. The cofactor is Mn(2+). Monoubiquitinated by RCHY1/PIRH2. Ubiquitination depends on integrity of the UBZ3-type zinc finger domain and is enhanced by TRAIP. Ubiquitination inhibits the ability of PolH to interact with PCNA and to bypass UV-induced lesions.

Its subcellular location is the nucleus. It carries out the reaction DNA(n) + a 2'-deoxyribonucleoside 5'-triphosphate = DNA(n+1) + diphosphate. The enzyme in complex with the DNA substrate binds a third divalent metal cation. The binding of this third divalent cation, which is coordinated by water molecules and two oxygen atoms from DNA and dNTP, is essential for catalyzing the DNA synthesis. Functionally, DNA polymerase specifically involved in the DNA repair by translesion synthesis (TLS). Due to low processivity on both damaged and normal DNA, cooperates with the heterotetrameric (REV3L, REV7, POLD2 and POLD3) POLZ complex for complete bypass of DNA lesions. Inserts one or 2 nucleotide(s) opposite the lesion, the primer is further extended by the tetrameric POLZ complex. In the case of 1,2-intrastrand d(GpG)-cisplatin cross-link, inserts dCTP opposite the 3' guanine. Particularly important for the repair of UV-induced pyrimidine dimers. Although inserts the correct base, may cause base transitions and transversions depending upon the context. May play a role in hypermutation at immunoglobulin genes. Forms a Schiff base with 5'-deoxyribose phosphate at abasic sites, but does not have any lyase activity, preventing the release of the 5'-deoxyribose phosphate (5'-dRP) residue. This covalent trapping of the enzyme by the 5'-dRP residue inhibits its DNA synthetic activity during base excision repair, thereby avoiding high incidence of mutagenesis. Targets POLI to replication foci. The sequence is that of DNA polymerase eta (POLH) from Homo sapiens (Human).